We begin with the raw amino-acid sequence, 95 residues long: Co-chaperonin GroES (95 aa).

The protein belongs to the GroES chaperonin family. In terms of assembly, heptamer of 7 subunits arranged in a ring. Interacts with the chaperonin GroEL.

The protein localises to the cytoplasm. Together with the chaperonin GroEL, plays an essential role in assisting protein folding. The GroEL-GroES system forms a nano-cage that allows encapsulation of the non-native substrate proteins and provides a physical environment optimized to promote and accelerate protein folding. GroES binds to the apical surface of the GroEL ring, thereby capping the opening of the GroEL channel. This chain is Co-chaperonin GroES, found in Rhodobacter capsulatus (Rhodopseudomonas capsulata).